Consider the following 492-residue polypeptide: Cytochrome P450 2A1 (492 aa).

Ser-130 bears the Phosphoserine mark. Cys-437 contributes to the heme binding site.

This sequence belongs to the cytochrome P450 family. Heme is required as a cofactor. In terms of tissue distribution, liver and testis.

The protein resides in the endoplasmic reticulum membrane. Its subcellular location is the microsome membrane. The enzyme catalyses an organic molecule + reduced [NADPH--hemoprotein reductase] + O2 = an alcohol + oxidized [NADPH--hemoprotein reductase] + H2O + H(+). In terms of biological role, highly active in the 7-alpha-hydroxylation of testosterone, progesterone and androstenedione. The polypeptide is Cytochrome P450 2A1 (Cyp2a1) (Rattus norvegicus (Rat)).